We begin with the raw amino-acid sequence, 816 residues long: Protein kinase C-binding protein NELL2 (816 aa).

The N-terminal stretch at 1–21 (MESRVLLRTFCLIFGLGAVWG) is a signal peptide. Residues N53, N225, N293, and N298 are each glycosylated (N-linked (GlcNAc...) asparagine). The 165-residue stretch at 64–228 (PRSIKASTAT…AQCPDLNRTC (165 aa)) folds into the Laminin G-like domain. In terms of domain architecture, VWFC 1 spans 272–331 (RTCTMKGTTYREFESWIDGCKNCTCLNGTIQCETLICPNPDCPLKSALAYVDGKCCKECK). The EGF-like 1 domain maps to 397 to 439 (GYDFCSERHNCMENSICRNLNDRAVCSCRDGFRALREDNAYCE). Intrachain disulfides connect C401-C413, C407-C422, and C424-C438. D440, I441, and E443 together coordinate Ca(2+). An EGF-like 2; calcium-binding domain is found at 440–481 (DIDECAEGRHYCRENTMCVNTPGSFMCICKTGYIRIDDYSCT). Intrachain disulfides connect C444/C457, C451/C466, C468/C480, C486/C499, C493/C508, C510/C521, C525/C535, C529/C541, and C543/C552. Positions 459, 460, and 463 each coordinate Ca(2+). Residues 482-522 (EHDECITNQHNCDENALCFNTVGGHNCVCKPGYTGNGTTCK) form the EGF-like 3; calcium-binding domain. N517 carries an N-linked (GlcNAc...) asparagine glycan. The EGF-like 4 domain occupies 523 to 553 (AFCKDGCRNGGACIAANVCACPQGFTGPSCE). The O-linked (GlcNAc...) threonine glycan is linked to T548. Ca(2+)-binding residues include D555, I556, and E558. Residues 555 to 601 (DIDECSDGFVQCDSRANCINLPGWYHCECRDGYHDNGMFSPSGESCE) enclose the EGF-like 5; calcium-binding domain. 3 disulfides stabilise this stretch: C559/C572, C566/C581, and C583/C600. Residues N574, L575, and W578 each contribute to the Ca(2+) site. Ca(2+) is bound by residues D602, I603, and E605. Positions 602–637 (DIDECGTGRHSCANDTICFNLDGGYDCRCPHGKNCT) constitute an EGF-like 6; calcium-binding domain. Intrachain disulfides connect C606/C619, C613/C628, and C630/C636. A glycan (N-linked (GlcNAc...) asparagine) is linked at N615. Residues N621, L622, and G625 each contribute to the Ca(2+) site. A glycan (N-linked (GlcNAc...) asparagine) is linked at N635. 2 VWFC domains span residues 638 to 693 (GDCI…PECD) and 698 to 756 (SQCL…PRCV).

Homotrimer. Binds to PRKCB. Interacts with NICOL1; this interaction triggers epididymal differentiation. Interacts (via the EGF domains) with ROBO3 (via Fibronectin type-III 1 domain) with a 3:3 stoichiometry; this interaction promotes oligomerization of ROBO3 resulting in the repulsion of commissural axons in the midline.

It localises to the secreted. Functionally, plays multiple roles in neural tissues, regulates neuronal proliferation, survival, differentiation, polarization, as well as axon guidance and synaptic functions. Plays an important role in axon development during neuronal differentiation through the MAPK intracellular signaling pathway. Via binding to its receptor ROBO3, plays a role in axon guidance, functioning as a repulsive axon guidance cue that contributes to commissural axon guidance to the midline. Required for neuron survival through the modulation of MAPK signaling pathways too. Involved in the regulation of hypothalamic GNRH secretion and the control of puberty. Its function is as follows. Epididymal-secreted protein that signals through a ROS1-pathway to regulate the epididymal initial segment (IS) maturation, sperm maturation and male fertility. The sequence is that of Protein kinase C-binding protein NELL2 from Homo sapiens (Human).